The sequence spans 501 residues: Bifunctional purine biosynthesis protein PurH (501 aa).

The 144-residue stretch at Met-1 to Ser-144 folds into the MGS-like domain.

Belongs to the PurH family.

The enzyme catalyses (6R)-10-formyltetrahydrofolate + 5-amino-1-(5-phospho-beta-D-ribosyl)imidazole-4-carboxamide = 5-formamido-1-(5-phospho-D-ribosyl)imidazole-4-carboxamide + (6S)-5,6,7,8-tetrahydrofolate. It catalyses the reaction IMP + H2O = 5-formamido-1-(5-phospho-D-ribosyl)imidazole-4-carboxamide. It participates in purine metabolism; IMP biosynthesis via de novo pathway; 5-formamido-1-(5-phospho-D-ribosyl)imidazole-4-carboxamide from 5-amino-1-(5-phospho-D-ribosyl)imidazole-4-carboxamide (10-formyl THF route): step 1/1. The protein operates within purine metabolism; IMP biosynthesis via de novo pathway; IMP from 5-formamido-1-(5-phospho-D-ribosyl)imidazole-4-carboxamide: step 1/1. The chain is Bifunctional purine biosynthesis protein PurH from Clostridium botulinum (strain Eklund 17B / Type B).